The following is a 266-amino-acid chain: Interleukin-1 beta (266 aa).

Positions 1-113 are excised as a propeptide; it reads MATVPEPINE…ETSSDELLCD (113 aa).

The protein belongs to the IL-1 family. Monomer. In its precursor form, weakly interacts with full-length MEFV; the mature cytokine does not interact at all. Interacts with integrins ITGAV:ITGBV and ITGA5:ITGB1; integrin-binding is required for IL1B signaling. Interacts with cargo receptor TMED10; the interaction is direct and is required for the secretion of IL1B mature form. Interacts with HSP90AB1; the interaction facilitates cargo translocation into the ERGIC. Interacts with HSP90B1; the interaction facilitates cargo translocation into the ERGIC.

Its subcellular location is the cytoplasm. The protein localises to the cytosol. The protein resides in the secreted. It localises to the lysosome. It is found in the extracellular exosome. In terms of biological role, potent pro-inflammatory cytokine. Initially discovered as the major endogenous pyrogen, induces prostaglandin synthesis, neutrophil influx and activation, T-cell activation and cytokine production, B-cell activation and antibody production, and fibroblast proliferation and collagen production. Promotes Th17 differentiation of T-cells. Synergizes with IL12/interleukin-12 to induce IFNG synthesis from T-helper 1 (Th1) cells. Plays a role in angiogenesis by inducing VEGF production synergistically with TNF and IL6. Involved in transduction of inflammation downstream of pyroptosis: its mature form is specifically released in the extracellular milieu by passing through the gasdermin-D (GSDMD) pore. This Ovis aries (Sheep) protein is Interleukin-1 beta (IL1B).